The following is a 271-amino-acid chain: MGHMVNAIYQIDEFVNLGANSIETDVSFDDNANPEYTYRGIPCDCGRSCLKWENYNDFLKGLRSATTPGNSKYQSKLILVVFDLKTGSLYDNQASEAGKKLAKNLLKHYWNNGNNGGRAYIVLSIPDLNHYPLIKGFTDTLKQEGHPELLEKVGYDFSGNDAIGDVAKAYKKAGVSGHVWQSDGITNCLLRGLSRVKDAVANRDSGKGYINKVYYWTVDKRATTRDALDAGVDGVMTNYPDVIADVMNEAAYKNKVRLATYEDSPWVTFKK.

H3 is an active-site residue. Mg(2+) contacts are provided by E23 and D25. 2 disulfide bridges follow: C43–C49 and C45–C188. D83 contacts Mg(2+).

The protein belongs to the arthropod phospholipase D family. Class II subfamily. Mg(2+) serves as cofactor. In terms of tissue distribution, expressed by the venom gland.

It localises to the secreted. The enzyme catalyses an N-(acyl)-sphingosylphosphocholine = an N-(acyl)-sphingosyl-1,3-cyclic phosphate + choline. It carries out the reaction an N-(acyl)-sphingosylphosphoethanolamine = an N-(acyl)-sphingosyl-1,3-cyclic phosphate + ethanolamine. It catalyses the reaction a 1-acyl-sn-glycero-3-phosphocholine = a 1-acyl-sn-glycero-2,3-cyclic phosphate + choline. The catalysed reaction is a 1-acyl-sn-glycero-3-phosphoethanolamine = a 1-acyl-sn-glycero-2,3-cyclic phosphate + ethanolamine. Dermonecrotic toxins cleave the phosphodiester linkage between the phosphate and headgroup of certain phospholipids (sphingolipid and lysolipid substrates), forming an alcohol (often choline) and a cyclic phosphate. This toxin acts on sphingomyelin (SM). It may also act on ceramide phosphoethanolamine (CPE), lysophosphatidylcholine (LPC) and lysophosphatidylethanolamine (LPE), but not on lysophosphatidylserine (LPS), and lysophosphatidylglycerol (LPG). It acts by transphosphatidylation, releasing exclusively cyclic phosphate products as second products. Induces dermonecrosis, hemolysis, increased vascular permeability, edema, inflammatory response, and platelet aggregation. The protein is Dermonecrotic toxin LhSicTox-alphaIA2bv of Loxosceles hirsuta (Recluse spider).